The sequence spans 143 residues: Hemoglobin subunit alpha-2 (143 aa).

An N-acetylserine modification is found at S2. One can recognise a Globin domain in the interval 2-143 (SLTEKDKAAV…LSLALAEKYR (142 aa)). H60 serves as a coordination point for O2. H89 is a heme b binding site.

This sequence belongs to the globin family. Hb2 is a heterotetramer of two alpha-2 chains and two beta-1 chains; Hb3 is a heterotetramer of two alpha-2 chains and two beta-2 chains. In terms of tissue distribution, red blood cells.

Functionally, involved in oxygen transport from gills to the various peripheral tissues. The sequence is that of Hemoglobin subunit alpha-2 (hba2) from Anarhichas minor (Arctic spotted wolffish).